We begin with the raw amino-acid sequence, 440 residues long: GTPase Der (440 aa).

EngA-type G domains lie at 4 to 169 and 178 to 353; these read PVVA…PEED and IKVA…DQAA. Residues 10–17, 57–61, 120–123, 184–191, 231–235, and 296–299 contribute to the GTP site; these read GRPNVGKS, DTGGI, NKVD, GKPNVGKS, DTAGI, and NKWD. A KH-like domain is found at 354 to 438; it reads MRISTGVLND…PIKFILREKE (85 aa).

Belongs to the TRAFAC class TrmE-Era-EngA-EngB-Septin-like GTPase superfamily. EngA (Der) GTPase family. In terms of assembly, associates with the 50S ribosomal subunit.

Its function is as follows. GTPase that plays an essential role in the late steps of ribosome biogenesis. In Acetivibrio thermocellus (strain ATCC 27405 / DSM 1237 / JCM 9322 / NBRC 103400 / NCIMB 10682 / NRRL B-4536 / VPI 7372) (Clostridium thermocellum), this protein is GTPase Der.